A 586-amino-acid polypeptide reads, in one-letter code: Arrestin-related trafficking adapter 5 (586 aa).

Disordered regions lie at residues 123–145 (GENA…DMDT) and 182–217 (ENGV…YSNR). Positions 126-145 (AENQHNSSSGRSTSNQDMDT) are enriched in polar residues. Positions 199 to 216 (SRSSSSNTLNNNSHSYSN) are enriched in low complexity. Lysine 364 participates in a covalent cross-link: Glycyl lysine isopeptide (Lys-Gly) (interchain with G-Cter in ubiquitin).

The protein belongs to the arrestin family. As to quaternary structure, interacts with RSP5. Post-translationally, ubiquitinated by RSP5.

In terms of biological role, may regulate endocytosis by recruiting RSP5 ubiquitin ligase activity to specific plasma membrane proteins in response to extracellular stimuli. This chain is Arrestin-related trafficking adapter 5 (ART5), found in Saccharomyces cerevisiae (strain ATCC 204508 / S288c) (Baker's yeast).